Consider the following 122-residue polypeptide: Large ribosomal subunit protein uL14 (122 aa).

Belongs to the universal ribosomal protein uL14 family. Part of the 50S ribosomal subunit. Forms a cluster with proteins L3 and L19. In the 70S ribosome, L14 and L19 interact and together make contacts with the 16S rRNA in bridges B5 and B8.

Binds to 23S rRNA. Forms part of two intersubunit bridges in the 70S ribosome. The polypeptide is Large ribosomal subunit protein uL14 (Trichodesmium erythraeum (strain IMS101)).